Here is a 70-residue protein sequence, read N- to C-terminus: MNFLAAAIAAGLAAFAASYGNGKVISKTIESMARQPELSAQLRSTMFIGVGLIEAVPILSIVVSFLILFS.

The next 2 helical transmembrane spans lie at 1-21 (MNFL…SYGN) and 47-67 (FIGV…SFLI).

This sequence belongs to the ATPase C chain family. In terms of assembly, F-type ATPases have 2 components, F(1) - the catalytic core - and F(0) - the membrane proton channel. F(1) has five subunits: alpha(3), beta(3), gamma(1), delta(1), epsilon(1). F(0) has three main subunits: a(1), b(2) and c(10-14). The alpha and beta chains form an alternating ring which encloses part of the gamma chain. F(1) is attached to F(0) by a central stalk formed by the gamma and epsilon chains, while a peripheral stalk is formed by the delta and b chains.

Its subcellular location is the cell membrane. F(1)F(0) ATP synthase produces ATP from ADP in the presence of a proton or sodium gradient. F-type ATPases consist of two structural domains, F(1) containing the extramembraneous catalytic core and F(0) containing the membrane proton channel, linked together by a central stalk and a peripheral stalk. During catalysis, ATP synthesis in the catalytic domain of F(1) is coupled via a rotary mechanism of the central stalk subunits to proton translocation. Functionally, key component of the F(0) channel; it plays a direct role in translocation across the membrane. A homomeric c-ring of between 10-14 subunits forms the central stalk rotor element with the F(1) delta and epsilon subunits. This Latilactobacillus sakei subsp. sakei (strain 23K) (Lactobacillus sakei subsp. sakei) protein is ATP synthase subunit c.